A 101-amino-acid chain; its full sequence is Small ribosomal subunit protein uS14 (101 aa).

A disordered region spans residues 51 to 70 (LPRDSSPSRQRNRCRQTGRP).

This sequence belongs to the universal ribosomal protein uS14 family. Part of the 30S ribosomal subunit. Contacts proteins S3 and S10.

Its function is as follows. Binds 16S rRNA, required for the assembly of 30S particles and may also be responsible for determining the conformation of the 16S rRNA at the A site. The protein is Small ribosomal subunit protein uS14 of Salmonella arizonae (strain ATCC BAA-731 / CDC346-86 / RSK2980).